A 95-amino-acid chain; its full sequence is Aspartyl/glutamyl-tRNA(Asn/Gln) amidotransferase subunit C (95 aa).

It belongs to the GatC family. In terms of assembly, heterotrimer of A, B and C subunits.

It catalyses the reaction L-glutamyl-tRNA(Gln) + L-glutamine + ATP + H2O = L-glutaminyl-tRNA(Gln) + L-glutamate + ADP + phosphate + H(+). The enzyme catalyses L-aspartyl-tRNA(Asn) + L-glutamine + ATP + H2O = L-asparaginyl-tRNA(Asn) + L-glutamate + ADP + phosphate + 2 H(+). Allows the formation of correctly charged Asn-tRNA(Asn) or Gln-tRNA(Gln) through the transamidation of misacylated Asp-tRNA(Asn) or Glu-tRNA(Gln) in organisms which lack either or both of asparaginyl-tRNA or glutaminyl-tRNA synthetases. The reaction takes place in the presence of glutamine and ATP through an activated phospho-Asp-tRNA(Asn) or phospho-Glu-tRNA(Gln). This is Aspartyl/glutamyl-tRNA(Asn/Gln) amidotransferase subunit C from Alkalilimnicola ehrlichii (strain ATCC BAA-1101 / DSM 17681 / MLHE-1).